The sequence spans 360 residues: Glutamate 5-kinase (360 aa).

Lys-7 serves as a coordination point for ATP. Substrate is bound by residues Ser-47, Asp-134, and Asn-146. ATP is bound by residues 166–167 and 210–216; these read TD and TGGISTK. A PUA domain is found at 275–356; it reads VGKITLDDGA…SSIIVVHRDV (82 aa).

Belongs to the glutamate 5-kinase family.

It localises to the cytoplasm. The catalysed reaction is L-glutamate + ATP = L-glutamyl 5-phosphate + ADP. It participates in amino-acid biosynthesis; L-proline biosynthesis; L-glutamate 5-semialdehyde from L-glutamate: step 1/2. Its function is as follows. Catalyzes the transfer of a phosphate group to glutamate to form L-glutamate 5-phosphate. The chain is Glutamate 5-kinase from Prochlorococcus marinus (strain MIT 9312).